An 85-amino-acid polypeptide reads, in one-letter code: RNA-binding protein Hfq (85 aa).

Residues Asp-9 to Phe-68 form the Sm domain.

This sequence belongs to the Hfq family. Homohexamer.

RNA chaperone that binds small regulatory RNA (sRNAs) and mRNAs to facilitate mRNA translational regulation in response to envelope stress, environmental stress and changes in metabolite concentrations. Also binds with high specificity to tRNAs. This Shewanella frigidimarina (strain NCIMB 400) protein is RNA-binding protein Hfq.